The chain runs to 290 residues: Phosphatidylglycerol--prolipoprotein diacylglyceryl transferase (290 aa).

A run of 7 helical transmembrane segments spans residues 21–41 (VSLH…MWLA), 60–80 (LLYA…VLFY), 96–116 (WDGG…MLWF), 124–144 (FFQV…AGRL), 199–219 (SQLY…NLFI), 226–246 (GSVS…VECF), and 259–279 (VISM…IMMI). Arg-143 is an a 1,2-diacyl-sn-glycero-3-phospho-(1'-sn-glycerol) binding site.

Belongs to the Lgt family.

Its subcellular location is the cell inner membrane. It carries out the reaction L-cysteinyl-[prolipoprotein] + a 1,2-diacyl-sn-glycero-3-phospho-(1'-sn-glycerol) = an S-1,2-diacyl-sn-glyceryl-L-cysteinyl-[prolipoprotein] + sn-glycerol 1-phosphate + H(+). The protein operates within protein modification; lipoprotein biosynthesis (diacylglyceryl transfer). Catalyzes the transfer of the diacylglyceryl group from phosphatidylglycerol to the sulfhydryl group of the N-terminal cysteine of a prolipoprotein, the first step in the formation of mature lipoproteins. The polypeptide is Phosphatidylglycerol--prolipoprotein diacylglyceryl transferase (Yersinia enterocolitica serotype O:8 / biotype 1B (strain NCTC 13174 / 8081)).